The sequence spans 137 residues: Small ribosomal subunit protein uS12 (137 aa).

Residue Asp-89 is modified to 3-methylthioaspartic acid. The segment at 104 to 137 (TAGVNGRKQSRSKYGAKRPKPGQAAAAPAKGKKK) is disordered. The segment covering 111–123 (KQSRSKYGAKRPK) has biased composition (basic residues). Residues 124 to 137 (PGQAAAAPAKGKKK) show a composition bias toward low complexity.

Belongs to the universal ribosomal protein uS12 family. Part of the 30S ribosomal subunit. Contacts proteins S8 and S17. May interact with IF1 in the 30S initiation complex.

Its function is as follows. With S4 and S5 plays an important role in translational accuracy. Functionally, interacts with and stabilizes bases of the 16S rRNA that are involved in tRNA selection in the A site and with the mRNA backbone. Located at the interface of the 30S and 50S subunits, it traverses the body of the 30S subunit contacting proteins on the other side and probably holding the rRNA structure together. The combined cluster of proteins S8, S12 and S17 appears to hold together the shoulder and platform of the 30S subunit. This is Small ribosomal subunit protein uS12 from Cytophaga hutchinsonii (strain ATCC 33406 / DSM 1761 / CIP 103989 / NBRC 15051 / NCIMB 9469 / D465).